Here is a 259-residue protein sequence, read N- to C-terminus: Phosphatidylglycerol--prolipoprotein diacylglyceryl transferase (259 aa).

A run of 4 helical transmembrane segments spans residues 10–30 (IGLL…LFAY), 50–70 (IISW…ILFY), 86–106 (WKGG…MYIF), and 112–132 (IKFL…IFLG). A 1,2-diacyl-sn-glycero-3-phospho-(1'-sn-glycerol) is bound at residue arginine 133. A run of 3 helical transmembrane segments spans residues 169-189 (LYEA…LFFF), 197-217 (GMLF…IEFV), and 227-247 (ILFN…ILGI).

The protein belongs to the Lgt family.

It localises to the cell inner membrane. The enzyme catalyses L-cysteinyl-[prolipoprotein] + a 1,2-diacyl-sn-glycero-3-phospho-(1'-sn-glycerol) = an S-1,2-diacyl-sn-glyceryl-L-cysteinyl-[prolipoprotein] + sn-glycerol 1-phosphate + H(+). The protein operates within protein modification; lipoprotein biosynthesis (diacylglyceryl transfer). Its function is as follows. Catalyzes the transfer of the diacylglyceryl group from phosphatidylglycerol to the sulfhydryl group of the N-terminal cysteine of a prolipoprotein, the first step in the formation of mature lipoproteins. The chain is Phosphatidylglycerol--prolipoprotein diacylglyceryl transferase from Ehrlichia ruminantium (strain Gardel).